A 111-amino-acid chain; its full sequence is MEVQAKLKFAKISAQKCRLVADQIRGLPVEKAINLLTFSNKKAAVLIKDVLNSAIANAEHNDGMDVDSLFVSTVFVDEGPTMKRFEARAKGRGNRILKRTSHITVKVAEKN.

Belongs to the universal ribosomal protein uL22 family. Part of the 50S ribosomal subunit.

This protein binds specifically to 23S rRNA; its binding is stimulated by other ribosomal proteins, e.g. L4, L17, and L20. It is important during the early stages of 50S assembly. It makes multiple contacts with different domains of the 23S rRNA in the assembled 50S subunit and ribosome. Its function is as follows. The globular domain of the protein is located near the polypeptide exit tunnel on the outside of the subunit, while an extended beta-hairpin is found that lines the wall of the exit tunnel in the center of the 70S ribosome. The protein is Large ribosomal subunit protein uL22 of Francisella philomiragia subsp. philomiragia (strain ATCC 25017 / CCUG 19701 / FSC 153 / O#319-036).